We begin with the raw amino-acid sequence, 288 residues long: Protease HtpX (288 aa).

Helical transmembrane passes span 5-25 (IALF…VMSL) and 35-55 (GLLV…LLLS). Position 140 (His-140) interacts with Zn(2+). Glu-141 is a catalytic residue. His-144 lines the Zn(2+) pocket. Transmembrane regions (helical) follow at residues 155–175 (LLQG…GGII) and 194–214 (IIVF…SMWF). Glu-219 is a Zn(2+) binding site.

This sequence belongs to the peptidase M48B family. It depends on Zn(2+) as a cofactor.

The protein localises to the cell inner membrane. This Stenotrophomonas maltophilia (strain K279a) protein is Protease HtpX.